Here is a 561-residue protein sequence, read N- to C-terminus: DNA ligase (561 aa).

Position 253 (Glu253) interacts with ATP. Lys255 acts as the N6-AMP-lysine intermediate in catalysis. ATP contacts are provided by Arg260, Arg275, Glu304, Phe344, Arg421, and Lys427.

Belongs to the ATP-dependent DNA ligase family. It depends on Mg(2+) as a cofactor.

The enzyme catalyses ATP + (deoxyribonucleotide)n-3'-hydroxyl + 5'-phospho-(deoxyribonucleotide)m = (deoxyribonucleotide)n+m + AMP + diphosphate.. Its function is as follows. DNA ligase that seals nicks in double-stranded DNA during DNA replication, DNA recombination and DNA repair. The chain is DNA ligase from Halobacterium salinarum (strain ATCC 29341 / DSM 671 / R1).